An 86-amino-acid polypeptide reads, in one-letter code: Small ribosomal subunit protein bS20 (86 aa).

Basic residues predominate over residues 1–11 (MANIKSAKKRA). The tract at residues 1–26 (MANIKSAKKRAITSEKNRQHNASRRS) is disordered.

This sequence belongs to the bacterial ribosomal protein bS20 family.

Its function is as follows. Binds directly to 16S ribosomal RNA. The sequence is that of Small ribosomal subunit protein bS20 from Pseudoalteromonas translucida (strain TAC 125).